Reading from the N-terminus, the 334-residue chain is Methionine adenosyltransferase 2 subunit beta (334 aa).

NADP(+)-binding positions include 37–40 (TGLL), 60–62 (FRR), 71–72 (NL), Cys93, Arg97, Tyr159, and Leu185. Phosphothreonine is present on Thr309. The tract at residues 319–334 (LWPFLIDKRWRQTVFH) is required for interaction with MAT2A.

It belongs to the dTDP-4-dehydrorhamnose reductase family. MAT2B subfamily. In terms of assembly, heterotrimer; composed of a catalytic MAT2A homodimer that binds one regulatory MAT2B chain. Heterohexamer; composed of a central, catalytic MAT2A homotetramer flanked on either side by a regulatory MAT2B chain. NADP binding increases the affinity for MAT2A.

Its pathway is amino-acid biosynthesis; S-adenosyl-L-methionine biosynthesis; S-adenosyl-L-methionine from L-methionine: step 1/1. Functionally, regulatory subunit of S-adenosylmethionine synthetase 2, an enzyme that catalyzes the formation of S-adenosylmethionine from methionine and ATP. Regulates MAT2A catalytic activity by changing its kinetic properties, increasing its affinity for L-methionine. Can bind NADP (in vitro). This chain is Methionine adenosyltransferase 2 subunit beta (Mat2b), found in Rattus norvegicus (Rat).